Reading from the N-terminus, the 184-residue chain is Pupal cuticle protein (184 aa).

A signal peptide spans 1-15; that stretch reads MYLLVNFIVALAVLQ. Residues 42 to 103 enclose the Chitin-binding type R&amp;R domain; it reads DGKYRYAYET…PVGAHIPQVP (62 aa). Over residues 147 to 160 the composition is skewed to polar residues; sequence DHTIPQSRPSTTPK. Positions 147 to 184 are disordered; sequence DHTIPQSRPSTTPKTIYLTHPPTTTSRPLRQRRALPTH. Positions 175 to 184 are enriched in basic residues; sequence LRQRRALPTH.

Component of the cuticle of the pupa of fruit fly. The protein is Pupal cuticle protein (Pcp) of Drosophila melanogaster (Fruit fly).